Here is a 116-residue protein sequence, read N- to C-terminus: Large ribosomal subunit protein bL19 (116 aa).

The protein belongs to the bacterial ribosomal protein bL19 family.

In terms of biological role, this protein is located at the 30S-50S ribosomal subunit interface and may play a role in the structure and function of the aminoacyl-tRNA binding site. This chain is Large ribosomal subunit protein bL19, found in Clostridioides difficile (strain 630) (Peptoclostridium difficile).